Reading from the N-terminus, the 134-residue chain is ATP synthase epsilon chain (134 aa).

Belongs to the ATPase epsilon chain family. As to quaternary structure, F-type ATPases have 2 components, CF(1) - the catalytic core - and CF(0) - the membrane proton channel. CF(1) has five subunits: alpha(3), beta(3), gamma(1), delta(1), epsilon(1). CF(0) has three main subunits: a, b and c.

Its subcellular location is the cellular thylakoid membrane. Its function is as follows. Produces ATP from ADP in the presence of a proton gradient across the membrane. The protein is ATP synthase epsilon chain of Prochlorococcus marinus (strain AS9601).